Reading from the N-terminus, the 361-residue chain is Pseudouridine-5'-phosphate glycosidase (361 aa).

E27 functions as the Proton donor in the catalytic mechanism. Residues K88 and V108 each contribute to the substrate site. Mn(2+) is bound at residue D140. S142–D144 contacts substrate. The active-site Nucleophile is K161. The disordered stretch occupies residues D306–P361. The span at P312–A333 shows a compositional bias: pro residues. Low complexity predominate over residues A334–A354.

This sequence belongs to the pseudouridine-5'-phosphate glycosidase family. In terms of assembly, homotrimer. Mn(2+) is required as a cofactor.

It catalyses the reaction D-ribose 5-phosphate + uracil = psi-UMP + H2O. Its function is as follows. Catalyzes the reversible cleavage of pseudouridine 5'-phosphate (PsiMP) to ribose 5-phosphate and uracil. Functions biologically in the cleavage direction, as part of a pseudouridine degradation pathway. The protein is Pseudouridine-5'-phosphate glycosidase of Frankia alni (strain DSM 45986 / CECT 9034 / ACN14a).